The sequence spans 512 residues: Solute carrier family 40 member 2 (512 aa).

Residues 1–28 (MEEETETRVFLSNEQHQEEEEEEEEEPS) form a disordered region. Residues 17 to 27 (QEEEEEEEEEP) show a composition bias toward acidic residues. 11 helical membrane-spanning segments follow: residues 55-75 (VALYMIYLWPNSLFLTAMYGV), 105-125 (LVTQNLSFIVAGGAVVALLVV), 133-153 (FPVFATLVVLTNLSGAIGVLS), 187-207 (GIDLSSKLLSPVITGLIISFV), 214-234 (ITFAAWATITVWIEYWLFISV), 310-330 (IVLPGVSLALLFFTVLSFGTL), 343-363 (YIIGIGRGISAGVGLAATVLY), 376-396 (GVWSFWSQWTCLLVCVGSIWV), 405-425 (MLMAGVAASRLGLWMFDLAVI), 442-462 (GVQNSLQSALDLMANLLGIIV), and 468-488 (FWMLTLISFATVSLAGILYTI).

It belongs to the ferroportin (FP) (TC 2.A.100) family. SLC40A subfamily.

It is found in the vacuole membrane. Its function is as follows. Vacuolar transporter that is involved in the transport of excess nickel into the vacuole under iron deficiency, increasing cellular tolerance to nickel under iron deficiency stress response. This Arabidopsis thaliana (Mouse-ear cress) protein is Solute carrier family 40 member 2 (IREG2).